The following is a 706-amino-acid chain: MSFLPLRSRSRSGAPHWVYIILYHIFTIPKIYSLPLLSGSHVLNSRDVADSGHSVGDEASVTTYYIISIILVLLGGVFAGLTLGLMGQDEVYLKVISTSGSNSEKKLAKRVLDLISRGKHWVLVTLLLSNVITNETLPIVLDRCLGGGWQAVVSSTILIVIFGEIIPQSVCVKYGLQVGAFFCPFVLVLMYLMYPVAYPIATLLDYMLGEDHGTMYKKSGLKTLVTLHRTMGVERLTKDEVTIISAVLDLKAKRVEEIMTPIENVFTMSADTILDDKTVEKIFNSGFSRIPIFLPNEPNNFIGMLLVRVLISYDPDDCLPISHFPLATLPETSPNTSCLNILNYFQEGKAHMCVVSKEPGSSHGAIGVLTLEDVIEELIGEEIVDESDVFVDMHQHIMRQQPGPLSKRHITSYLHHLYTSSHKEHKAADQADESSPLLSPSNSNHPSEHPQQDLNNKSWKQKSNDGYDRSNAVLSPTPQVTEHGTIIPSNLASNPLNVNKSFVTIKKPANVPKIITTHTPHSSKEPSPAPHSNDKSLSAEEQQLLSDHAELSRQAVLHTQRSGQPTQVTTSTKTTRNSPDSISIPNSGANHGNENQNVTISTSYQNTKNGIVESVITVKGVPKTIIGPAKDWDESKSEYGNENINQENSNRSDDRESSSSNASLFSSIKNKFKNENANNNDRSNFTDSLSRTSNYDANGSSSTIKR.

Over 1–16 (MSFLPLRSRSRSGAPH) the chain is Vacuolar. The helical transmembrane segment at 17-37 (WVYIILYHIFTIPKIYSLPLL) threads the bilayer. Topologically, residues 38–65 (SGSHVLNSRDVADSGHSVGDEASVTTYY) are cytoplasmic. One can recognise a CNNM transmembrane domain in the interval 57–240 (DEASVTTYYI…MGVERLTKDE (184 aa)). The chain crosses the membrane as a helical span at residues 66–86 (IISIILVLLGGVFAGLTLGLM). Over 87 to 120 (GQDEVYLKVISTSGSNSEKKLAKRVLDLISRGKH) the chain is Vacuolar. A helical membrane pass occupies residues 121–141 (WVLVTLLLSNVITNETLPIVL). Over 142 to 145 (DRCL) the chain is Cytoplasmic. A helical transmembrane segment spans residues 146-166 (GGGWQAVVSSTILIVIFGEII). At 167–177 (PQSVCVKYGLQ) the chain is on the vacuolar side. The helical transmembrane segment at 178-198 (VGAFFCPFVLVLMYLMYPVAY) threads the bilayer. Residues 199 to 706 (PIATLLDYML…ANGSSSTIKR (508 aa)) lie on the Cytoplasmic side of the membrane. CBS domains are found at residues 259 to 320 (MTPI…DCLP) and 321 to 386 (ISHF…IVDE). 3 disordered regions span residues 421–495 (SHKE…ASNP), 515–540 (ITTH…LSAE), and 557–597 (LHTQ…ENQN). Positions 433–445 (ESSPLLSPSNSNH) are enriched in low complexity. Residues Ser439 and Ser447 each carry the phosphoserine modification. Residues 472-495 (AVLSPTPQVTEHGTIIPSNLASNP) show a composition bias toward polar residues. Phosphoserine is present on Ser527. Residues 566–575 (TQVTTSTKTT) show a composition bias toward low complexity. The span at 576–597 (RNSPDSISIPNSGANHGNENQN) shows a compositional bias: polar residues. Ser603 carries the phosphoserine modification. At Tyr604 the chain carries Phosphotyrosine. Thr607 is subject to Phosphothreonine. Residue Ser614 is modified to Phosphoserine. The tract at residues 626–706 (IGPAKDWDES…ANGSSSTIKR (81 aa)) is disordered. Positions 630-639 (KDWDESKSEY) are enriched in basic and acidic residues. A compositionally biased stretch (low complexity) spans 658 to 680 (SSSNASLFSSIKNKFKNENANNN). Polar residues predominate over residues 681-706 (DRSNFTDSLSRTSNYDANGSSSTIKR).

Belongs to the ACDP family.

The protein localises to the vacuole membrane. Functionally, involved in metal homeostasis and more specially in manganese sensitivity. In Saccharomyces cerevisiae (strain ATCC 204508 / S288c) (Baker's yeast), this protein is Protein MAM3 (MAM3).